The sequence spans 344 residues: Arginine N-succinyltransferase (344 aa).

Leu-125 is a succinyl-CoA binding site. His-229 (proton donor) is an active-site residue.

The protein belongs to the arginine N-succinyltransferase family.

It carries out the reaction succinyl-CoA + L-arginine = N(2)-succinyl-L-arginine + CoA + H(+). The protein operates within amino-acid degradation; L-arginine degradation via AST pathway; L-glutamate and succinate from L-arginine: step 1/5. In terms of biological role, catalyzes the transfer of succinyl-CoA to arginine to produce N(2)-succinylarginine. This Escherichia coli (strain UTI89 / UPEC) protein is Arginine N-succinyltransferase.